A 610-amino-acid polypeptide reads, in one-letter code: MNLEDLKKRQEKIRNFSIIAHIDHGKSTLADRILEKTETVSSREMQAQLLDSMDLERERGITIKLNAIELNYTAKDGETYIFHLIDTPGHVDFTYEVSRSLAACEGAILVVDAAQGIEAQTLANVYLALDNDLEILPIINKIDLPAADPERVRQEIEDVIGLDASEAVPTSAKAGIGIEEILEQIVEKVPAPTGDVEAPLQALIFDSVYDPYRGVILQVRIVNGVVKPGDTIQMMSNGKTFDVTEVGIFTPKAIGRDYLATGDVGYIAASIKTVADTRVGDTVTLAENPASEPLAGYKQMNPMVFAGIYPIDSNKYNDLREALEKLQLNDASLQFEPETSQALGFGFRCGFLGLLHMDVIQERIEREFNIDLIMTAPSVVYHVNMTDGEMIDVANPSEFPDPTKIATIEEPYVKAQIMVPQEYVGAVMELAQRKRGDFVTMDYIDDNRVNVIYQIPLAEIVFDFFDKLKSSTRGYASFDYEISEYRSSKLVKMDILLNGDKVDALSFIVHKEFAYERGKIIVDKLKKIIPRQQFEVPIQAAIGQKIVARSDIKALRKNVLAKCYGGDVSRKRKLLEKQKAGKKRMKAIGSVEVPQEAFLSVLSMDEDDKK.

Residues 11 to 193 enclose the tr-type G domain; it reads EKIRNFSIIA…QIVEKVPAPT (183 aa). Residues 23-28 and 140-143 each bind GTP; these read DHGKST and NKID.

This sequence belongs to the TRAFAC class translation factor GTPase superfamily. Classic translation factor GTPase family. LepA subfamily.

The protein resides in the cell membrane. It carries out the reaction GTP + H2O = GDP + phosphate + H(+). In terms of biological role, required for accurate and efficient protein synthesis under certain stress conditions. May act as a fidelity factor of the translation reaction, by catalyzing a one-codon backward translocation of tRNAs on improperly translocated ribosomes. Back-translocation proceeds from a post-translocation (POST) complex to a pre-translocation (PRE) complex, thus giving elongation factor G a second chance to translocate the tRNAs correctly. Binds to ribosomes in a GTP-dependent manner. This chain is Elongation factor 4, found in Streptococcus suis (strain 98HAH33).